A 735-amino-acid chain; its full sequence is Trafficking protein particle complex subunit 12 (735 aa).

2 disordered regions span residues M1–P204 and N237–S276. The span at P13–A22 shows a compositional bias: pro residues. Residues E34 to T50 are compositionally biased toward acidic residues. S109 and S184 each carry phosphoserine. TPR repeat units lie at residues G545–Q578, P580–L613, I620–N653, and A654–H687.

Component of the multisubunit TRAPP (transport protein particle) complex, which includes at least TRAPPC2, TRAPPC2L, TRAPPC3, TRAPPC3L, TRAPPC4, TRAPPC5, TRAPPC8, TRAPPC9, TRAPPC10, TRAPPC11 and TRAPPC12. Interacts with CENPE. Phosphorylated as the cells enter mitosis but is dephosphorylated at or before the onset of anaphase. The phosphorylated form recruits CENPE to kinetochores more efficiently than the non-phosphorylated form.

Its subcellular location is the endoplasmic reticulum-Golgi intermediate compartment. The protein localises to the nucleus. Its function is as follows. Component of the TRAPP complex, which is involved in endoplasmic reticulum to Golgi apparatus trafficking at a very early stage. Also plays a role in chromosome congression, kinetochore assembly and stability and controls the recruitment of CENPE to the kinetochores. In Homo sapiens (Human), this protein is Trafficking protein particle complex subunit 12.